The sequence spans 661 residues: Immunoglobulin-like domain-containing receptor 2 (661 aa).

An N-terminal signal peptide occupies residues 1-35 (MPAFPTLDLDGKLGKMDRVVLGWTAVFWLTAMVEG). The Ig-like V-type domain maps to 36 to 177 (LQVTVPDKKK…LEGKNEDSVE (142 aa)). The Lumenal segment spans residues 36-201 (LQVTVPDKKK…PSFAVEIMPE (166 aa)). A disulfide bridge connects residues Cys57 and Cys160. Residues 202–222 (WVFVGLVILGIFLFFVLVGIC) traverse the membrane as a helical segment. Residues 223–661 (WCQCCPHSCC…DFPTRMSLVV (439 aa)) are Cytoplasmic-facing. 3 disordered regions span residues 288–310 (LMDKPHPPPLAPSDSTGGSHSVR), 410–429 (EDRESFRHSQQRSKSEMLSR), and 453–661 (QRSR…SLVV). 2 stretches are compositionally biased toward basic and acidic residues: residues 410–428 (EDRESFRHSQQRSKSEMLS) and 463–478 (HEARAGSRFERSESRA). Ser487 carries the phosphoserine modification. Positions 491–506 (YYGRGRSREPPGDGER) are enriched in basic and acidic residues. An Omega-N-methylarginine modification is found at Arg559. Ser594 carries the post-translational modification Phosphoserine. Over residues 595-607 (EGEDEDDAADEDA) the composition is skewed to acidic residues. Residues 628–639 (RGRDLSFHSNSE) show a composition bias toward basic and acidic residues.

Belongs to the immunoglobulin superfamily. LISCH7 family. As to quaternary structure, interacts with MARVELD2 and OCLN. Interacts with P4HB and HSPA5; the interaction with HSPA5 stabilizes ILDR2 expression. Interacts (via C-terminus) with TRA2A, TRA2B and SRSF1. Expressed in epithelial tissues, mainly in liver, kidney and colon.

Its subcellular location is the endoplasmic reticulum membrane. It localises to the cell junction. The protein localises to the tight junction. It is found in the nucleus. Its function is as follows. May be involved in ER stress pathways with effects on lipid homeostasis and insulin secretion. With ILDR1 and LSR, involved in the maintain of the epithelial barrier function through the recruitment of MARVELD2/tricellulin to tricellular tight junctions. Also functions as a B7-like protein family member expressed on immune cells and inflamed tissue and with T-cell inhibitory activity. In the inner ear, may regulate alternative pre-mRNA splicing via binding to TRA2A, TRA2B and SRSF1. The sequence is that of Immunoglobulin-like domain-containing receptor 2 from Mus musculus (Mouse).